The chain runs to 195 residues: FMN-dependent NADH:quinone oxidoreductase (195 aa).

FMN contacts are provided by residues serine 10, 16 to 18 (SVS), and 88 to 91 (MYNF).

Belongs to the azoreductase type 1 family. Homodimer. It depends on FMN as a cofactor.

The enzyme catalyses 2 a quinone + NADH + H(+) = 2 a 1,4-benzosemiquinone + NAD(+). It catalyses the reaction N,N-dimethyl-1,4-phenylenediamine + anthranilate + 2 NAD(+) = 2-(4-dimethylaminophenyl)diazenylbenzoate + 2 NADH + 2 H(+). Its function is as follows. Quinone reductase that provides resistance to thiol-specific stress caused by electrophilic quinones. In terms of biological role, also exhibits azoreductase activity. Catalyzes the reductive cleavage of the azo bond in aromatic azo compounds to the corresponding amines. The polypeptide is FMN-dependent NADH:quinone oxidoreductase (Francisella philomiragia subsp. philomiragia (strain ATCC 25017 / CCUG 19701 / FSC 153 / O#319-036)).